Consider the following 504-residue polypeptide: Taurochenodeoxycholic 6 alpha-hydroxylase (504 aa).

A run of 2 helical transmembrane segments spans residues 6–26 (LASV…LLLL) and 110–130 (APVL…LLNG). Cys451 serves as a coordination point for heme.

It belongs to the cytochrome P450 family. Requires heme as cofactor. As to expression, primarily expressed in liver. Low expression in kidney.

The protein resides in the endoplasmic reticulum membrane. The catalysed reaction is taurochenodeoxycholate + reduced [NADPH--hemoprotein reductase] + O2 = taurohyocholate + oxidized [NADPH--hemoprotein reductase] + H2O + H(+). It catalyses the reaction lithocholate + reduced [NADPH--hemoprotein reductase] + O2 = hyodeoxycholate + oxidized [NADPH--hemoprotein reductase] + H2O + H(+). Functionally, catalyzes the 6 alpha hydroxylation oxidation of taurodeoxycholate to produce the pig specific bile acid taurohyocholic acid. This is Taurochenodeoxycholic 6 alpha-hydroxylase (CYP4A21) from Sus scrofa (Pig).